Here is a 398-residue protein sequence, read N- to C-terminus: Type II secretion system protein L (398 aa).

Residues methionine 1–proline 248 are Cytoplasmic-facing. Residues valine 249–leucine 265 form a helical membrane-spanning segment. At histidine 266–alanine 398 the chain is on the periplasmic side.

This sequence belongs to the GSP L family. Type II secretion system is composed of four main components: the outer membrane complex, the inner membrane complex, the cytoplasmic secretion ATPase and the periplasm-spanning pseudopilus. Forms homodimers. Interacts with PulM/GspM. Interacts with PulE/GspE and PulF/GspF.

It is found in the cell inner membrane. Its function is as follows. Inner membrane component of the type II secretion system required for the energy-dependent secretion of extracellular factors such as proteases and toxins from the periplasm. Plays a role in the complex assembly and recruits PulM resulting in a stable complex in the inner membrane. Provides thus a link between the energy-providing PulE protein in the cytoplasm and the rest of the T2SS machinery. This chain is Type II secretion system protein L (pulL), found in Klebsiella pneumoniae.